The primary structure comprises 444 residues: Sprouty-related, EVH1 domain-containing protein 1 (444 aa).

Ser2 is modified (N-acetylserine). The region spanning 6 to 123 is the WH1 domain; the sequence is ATSDNDNSYA…RGIRRAIEDI (118 aa). The segment at 123–151 is disordered; the sequence is ISQGCPESKNEAEGADDLQANEEDSSSSL. The segment covering 135 to 147 has biased composition (acidic residues); sequence EGADDLQANEEDS. Position 224 is an N6-methyllysine (Lys224). The KBD domain maps to 233 to 285; that stretch reads SIRHVSFQDEDEIVRINPRDILIRRYADYRHPDMWKNDLERDDADSSIQFSKP. Phosphoserine is present on residues Ser238 and Ser308. The required for interaction with TESK1 stretch occupies residues 333–444; that stretch reads SRCVYCQERF…CCGGKHKAAG (112 aa). The 109-residue stretch at 334–442 folds into the SPR domain; it reads RCVYCQERFN…CGCCGGKHKA (109 aa).

Homodimer and heterodimer. Able to interact with SPRED2 to form heterodimers. Interacts (via C-terminus) with TAOK1/MARKK (via C-terminus); the interaction does not affect TAOK1 kinase activity. Interacts (via C-terminus) with TESK1 (via C-terminus); the interaction inhibits TESK1 kinase activity. Interacts with CAV1. Interacts with RAS. Interacts with palmitoyltransferase ZDHHC17/HIP14; the interaction leads to palmitoylation of SPRED1. In terms of processing, palmitoylated by ZDHHC17/HIP14. Phosphorylated on tyrosine. Post-translationally, ubiquitinated. Weakly expressed in embryonic cell line HEK293.

Its subcellular location is the cell membrane. The protein resides in the membrane. It is found in the caveola. The protein localises to the nucleus. Its function is as follows. Tyrosine kinase substrate that inhibits growth-factor-mediated activation of MAP kinase. Negatively regulates hematopoiesis of bone marrow. Inhibits fibroblast growth factor (FGF)-induced retinal lens fiber differentiation, probably by inhibiting FGF-mediated phosphorylation of ERK1/2. Attenuates actin stress fiber formation via inhibition of TESK1-mediated phosphorylation of cofilin. Inhibits TGFB-induced epithelial-to-mesenchymal transition in lens epithelial cells. The chain is Sprouty-related, EVH1 domain-containing protein 1 (SPRED1) from Homo sapiens (Human).